The chain runs to 620 residues: Methionine--tRNA ligase (620 aa).

The 'HIGH' region signature appears at 11–21; sequence PYANGPRHIGH. Residues Cys-143, Cys-146, Cys-156, and Cys-159 each contribute to the Zn(2+) site. The 'KMSKS' region signature appears at 347-351; it reads KFSSS. Ser-350 is an ATP binding site.

The protein belongs to the class-I aminoacyl-tRNA synthetase family. MetG type 1 subfamily. Monomer. Zn(2+) is required as a cofactor.

It is found in the cytoplasm. The catalysed reaction is tRNA(Met) + L-methionine + ATP = L-methionyl-tRNA(Met) + AMP + diphosphate. Functionally, is required not only for elongation of protein synthesis but also for the initiation of all mRNA translation through initiator tRNA(fMet) aminoacylation. The polypeptide is Methionine--tRNA ligase (Bifidobacterium adolescentis (strain ATCC 15703 / DSM 20083 / NCTC 11814 / E194a)).